A 1872-amino-acid polypeptide reads, in one-letter code: Ral GTPase-activating protein subunit alpha-2 (1872 aa).

A disordered region spans residues 350 to 370 (DGAGSTEQDKSHSNSSTLSDR). Ser373, Ser376, and Ser379 each carry phosphoserine. Residues 445 to 469 (PDKKDVAQEDADKLGLSETDSKEAS) are compositionally biased toward basic and acidic residues. The segment at 445–481 (PDKKDVAQEDADKLGLSETDSKEASSESSGHKRSSSW) is disordered. Ser486 carries the phosphoserine modification. Ser696 carries the phosphoserine; by PKB modification. 2 disordered regions span residues 711 to 730 (FRSATTSGAPGVEKARNTVR) and 758 to 813 (QQVP…GITM). At Thr715 the chain carries Phosphothreonine; by PKB. 2 stretches are compositionally biased toward polar residues: residues 758 to 768 (QQVPRSSSTSD) and 775 to 795 (SDSSQGQKVEHSQNLSSSEPK). Residues 796-810 (SVQESKGHVTHEHEG) show a composition bias toward basic and acidic residues. Residues Ser819 and Ser820 each carry the phosphoserine modification. The disordered stretch occupies residues 831-851 (QQAHGRCRQRQTSESTGSDTV). The span at 840–849 (RQTSESTGSD) shows a compositional bias: polar residues. Ser1592 carries the phosphoserine modification. In terms of domain architecture, Rap-GAP spans 1634 to 1842 (LKNLDSRQCR…EERALYLEAI (209 aa)).

Component of the heterodimeric RalGAP2 complex with RALGAPB. Heterodimerization is required for activity. As to expression, abundantly expressed in testis, pancreas, lung, thymus, brown fat, and white fat.

The protein resides in the cytoplasm. In terms of biological role, catalytic subunit of the heterodimeric RalGAP2 complex which acts as a GTPase activator for the Ras-like small GTPases RALA and RALB. This Mus musculus (Mouse) protein is Ral GTPase-activating protein subunit alpha-2 (Ralgapa2).